A 399-amino-acid chain; its full sequence is Acetate kinase (399 aa).

N10 is a Mg(2+) binding site. K17 serves as a coordination point for ATP. Position 91 (R91) interacts with substrate. The active-site Proton donor/acceptor is D148. ATP is bound by residues 208-212, 283-285, and 331-335; these read HLGNG, DCR, and GIGEN. E385 contacts Mg(2+).

This sequence belongs to the acetokinase family. In terms of assembly, homodimer. It depends on Mg(2+) as a cofactor. The cofactor is Mn(2+).

The protein resides in the cytoplasm. It carries out the reaction acetate + ATP = acetyl phosphate + ADP. It functions in the pathway metabolic intermediate biosynthesis; acetyl-CoA biosynthesis; acetyl-CoA from acetate: step 1/2. Catalyzes the formation of acetyl phosphate from acetate and ATP. Can also catalyze the reverse reaction. The sequence is that of Acetate kinase from Shewanella oneidensis (strain ATCC 700550 / JCM 31522 / CIP 106686 / LMG 19005 / NCIMB 14063 / MR-1).